A 181-amino-acid chain; its full sequence is Peptide deformylase 1 (181 aa).

C106 and H148 together coordinate Fe cation. E149 is a catalytic residue. H152 contributes to the Fe cation binding site.

It belongs to the polypeptide deformylase family. The cofactor is Fe(2+).

It catalyses the reaction N-terminal N-formyl-L-methionyl-[peptide] + H2O = N-terminal L-methionyl-[peptide] + formate. Its function is as follows. Removes the formyl group from the N-terminal Met of newly synthesized proteins. Requires at least a dipeptide for an efficient rate of reaction. N-terminal L-methionine is a prerequisite for activity but the enzyme has broad specificity at other positions. In Burkholderia multivorans (strain ATCC 17616 / 249), this protein is Peptide deformylase 1.